We begin with the raw amino-acid sequence, 483 residues long: Glutamate--tRNA ligase 1 (483 aa).

Positions 9–19 (PSPTGFLHIGG) match the 'HIGH' region motif. The 'KMSKS' region signature appears at 238–242 (KLSKR). Lys-241 provides a ligand contact to ATP.

Belongs to the class-I aminoacyl-tRNA synthetase family. Glutamate--tRNA ligase type 1 subfamily. Monomer.

Its subcellular location is the cytoplasm. The enzyme catalyses tRNA(Glu) + L-glutamate + ATP = L-glutamyl-tRNA(Glu) + AMP + diphosphate. Its function is as follows. Catalyzes the attachment of glutamate to tRNA(Glu) in a two-step reaction: glutamate is first activated by ATP to form Glu-AMP and then transferred to the acceptor end of tRNA(Glu). The protein is Glutamate--tRNA ligase 1 of Bartonella henselae (strain ATCC 49882 / DSM 28221 / CCUG 30454 / Houston 1) (Rochalimaea henselae).